The primary structure comprises 170 residues: Small ribosomal subunit protein uS15 (170 aa).

Positions 1–10 (MARMHSRKKG) are enriched in basic residues. The interval 1–20 (MARMHSRKKGSSGSRPPVVD) is disordered.

This sequence belongs to the universal ribosomal protein uS15 family. As to quaternary structure, part of the 30S ribosomal subunit.

This is Small ribosomal subunit protein uS15 from Methanothrix thermoacetophila (strain DSM 6194 / JCM 14653 / NBRC 101360 / PT) (Methanosaeta thermophila).